The following is a 135-amino-acid chain: C-type lectin BPL (135 aa).

Cystine bridges form between Cys3–Cys14, Cys31–Cys131, Cys38–Cys133, and Cys106–Cys123. Positions 10-132 (MNGLCYKIFN…CESKNAFLCQ (123 aa)) constitute a C-type lectin domain. Ca(2+)-binding residues include Gln96, Asp98, Glu104, and Asp120. Positions 96-98 (QPD) match the Galactose-binding motif.

The protein belongs to the true venom lectin family. Homodimer; disulfide-linked. In terms of tissue distribution, expressed by the venom gland.

The protein resides in the secreted. Its function is as follows. Galactose-binding protein which recognizes specific carbohydrate structures and agglutinates a variety of animal cells by binding to cell-surface glycoproteins and glycolipids. Calcium-dependent lectin. Shows high hemagglutinating activity in the presence of human erythrocytes, which are agglutinated with a minimum hemagglutination concentration (MHC) of 2.5-0.35 ug/ml. Causes indirect nephrotoxicity. Causes reductions in perfusion pressures, renal vascular resistance, urinary flow, glomerular filtration rate, sodium, potassium and chloride tubular transport. Its effects may be caused by the release of inflammatory mediators. The sequence is that of C-type lectin BPL from Bothrops pirajai (Piraja's lancehead).